Here is a 448-residue protein sequence, read N- to C-terminus: MKHRYLPATEQDKKEMLKAIGAETIDELFADIPENVRFQKDYQIKKAKSETELTRELTKLAAKNKDAVTYASFLGAGVYDHYQPVIVDHVISRSEFYTAYTPYQPEISQGELQAIFEFQTMICELTGMDIANSSMYDGGTALAEAAMLASGHTKKKKIVISAAVHPESRDVLKTYAKGQYIEVVEVPAKNGVTDLEALEHAVCDETAAVIVQYPNFFGQIEPLKDIEPLAHKGNSQLIVSSNPLALGILTPPGAYGADIVVGDAQPFGIPAAFGGPHCGYFAVTKKLMRKVPGRLVGQTEDENGRRGFVLTLQAREQHIRRDKATSNICSNQALNALAASAAMTALGKNGVKDMARQNILKADYARRQAEKAGLHVAFDGPIFNEFAVRLNLPVKEANRRLLQDGIIGGYDLGLAYPELNQHMLIAVTELRTKEKIDSLIARLGDQHE.

The protein belongs to the GcvP family. N-terminal subunit subfamily. The glycine cleavage system is composed of four proteins: P, T, L and H. In this organism, the P 'protein' is a heterodimer of two subunits.

It catalyses the reaction N(6)-[(R)-lipoyl]-L-lysyl-[glycine-cleavage complex H protein] + glycine + H(+) = N(6)-[(R)-S(8)-aminomethyldihydrolipoyl]-L-lysyl-[glycine-cleavage complex H protein] + CO2. Its function is as follows. The glycine cleavage system catalyzes the degradation of glycine. The P protein binds the alpha-amino group of glycine through its pyridoxal phosphate cofactor; CO(2) is released and the remaining methylamine moiety is then transferred to the lipoamide cofactor of the H protein. The protein is Probable glycine dehydrogenase (decarboxylating) subunit 1 of Bacillus velezensis (strain DSM 23117 / BGSC 10A6 / LMG 26770 / FZB42) (Bacillus amyloliquefaciens subsp. plantarum).